The primary structure comprises 185 residues: Probable chorismate pyruvate-lyase 1 (185 aa).

Substrate is bound by residues Arg-70, Leu-108, and Glu-166.

It belongs to the UbiC family.

It localises to the cytoplasm. The catalysed reaction is chorismate = 4-hydroxybenzoate + pyruvate. It participates in cofactor biosynthesis; ubiquinone biosynthesis. Functionally, removes the pyruvyl group from chorismate, with concomitant aromatization of the ring, to provide 4-hydroxybenzoate (4HB) for the ubiquinone pathway. This chain is Probable chorismate pyruvate-lyase 1, found in Pseudomonas fluorescens (strain Pf0-1).